The primary structure comprises 274 residues: Shikimate dehydrogenase (NADP(+)) (274 aa).

Shikimate-binding positions include 14 to 16 (SKS) and threonine 61. The active-site Proton acceptor is the lysine 65. An NADP(+)-binding site is contributed by glutamate 77. Residues asparagine 86 and aspartate 102 each contribute to the shikimate site. NADP(+) is bound by residues 126 to 130 (GAGGA), 149 to 154 (NRTLEK), and methionine 212. Tyrosine 214 serves as a coordination point for shikimate. Glycine 237 contacts NADP(+).

This sequence belongs to the shikimate dehydrogenase family. As to quaternary structure, homodimer.

The catalysed reaction is shikimate + NADP(+) = 3-dehydroshikimate + NADPH + H(+). Its pathway is metabolic intermediate biosynthesis; chorismate biosynthesis; chorismate from D-erythrose 4-phosphate and phosphoenolpyruvate: step 4/7. Involved in the biosynthesis of the chorismate, which leads to the biosynthesis of aromatic amino acids. Catalyzes the reversible NADPH linked reduction of 3-dehydroshikimate (DHSA) to yield shikimate (SA). This is Shikimate dehydrogenase (NADP(+)) from Actinobacillus pleuropneumoniae serotype 5b (strain L20).